Reading from the N-terminus, the 294-residue chain is Large ribosomal subunit protein uL2 (294 aa).

Disordered stretches follow at residues 1-37 (MGIR…RPEK) and 228-294 (GSVM…RAAQ). Residues 10–22 (TPSTRHMTVSNFE) show a composition bias toward polar residues. A compositionally biased stretch (basic and acidic residues) spans 23 to 37 (ELSRDENGKRPRPEK). A compositionally biased stretch (basic residues) spans 264–285 (KTRKRNKPSNKFIVRGRRRGGR).

This sequence belongs to the universal ribosomal protein uL2 family. As to quaternary structure, part of the 50S ribosomal subunit. Forms a bridge to the 30S subunit in the 70S ribosome.

One of the primary rRNA binding proteins. Required for association of the 30S and 50S subunits to form the 70S ribosome, for tRNA binding and peptide bond formation. It has been suggested to have peptidyltransferase activity; this is somewhat controversial. Makes several contacts with the 16S rRNA in the 70S ribosome. This chain is Large ribosomal subunit protein uL2, found in Synechococcus sp. (strain JA-3-3Ab) (Cyanobacteria bacterium Yellowstone A-Prime).